A 178-amino-acid polypeptide reads, in one-letter code: HTH-type transcriptional regulator SutR (178 aa).

The HTH cro/C1-type domain maps to 12–66; the sequence is LKQLRQQRGWSLSRLAEATGVSKAMLGQIERNESSPTVATLWKIATGLNVPFSTF. Positions 23-42 form a DNA-binding region, H-T-H motif; sequence LSRLAEATGVSKAMLGQIER. The Cupin type-2 domain maps to 105-171; it reads QMASGAISES…GGEQTVHFHS (67 aa).

Its function is as follows. Regulates the expression of 12-16 transcription units involved in various steps of sulfur utilization. Represses expression of pfkB, fliZ, cysE, ydcO and its own expression. Activates expression of ypfN. Acts by binding to SutR boxes. The polypeptide is HTH-type transcriptional regulator SutR (Escherichia coli (strain K12)).